Reading from the N-terminus, the 377-residue chain is Chaperone protein DnaJ (377 aa).

The region spanning 5–70 is the J domain; the sequence is DYYQVLGVAK…QKRAAYDQYG (66 aa). The CR-type zinc finger occupies 137–215; sequence GYDTQIRVPS…CHGAGKTKET (79 aa). The Zn(2+) site is built by Cys150, Cys153, Cys167, Cys170, Cys189, Cys192, Cys203, and Cys206. CXXCXGXG motif repeat units follow at residues 150 to 157, 167 to 174, 189 to 196, and 203 to 210; these read CEICHGSG, CPTCNGSG, CPKCHGTG, and CTHCHGAG.

This sequence belongs to the DnaJ family. Homodimer. Zn(2+) is required as a cofactor.

The protein resides in the cytoplasm. Functionally, participates actively in the response to hyperosmotic and heat shock by preventing the aggregation of stress-denatured proteins and by disaggregating proteins, also in an autonomous, DnaK-independent fashion. Unfolded proteins bind initially to DnaJ; upon interaction with the DnaJ-bound protein, DnaK hydrolyzes its bound ATP, resulting in the formation of a stable complex. GrpE releases ADP from DnaK; ATP binding to DnaK triggers the release of the substrate protein, thus completing the reaction cycle. Several rounds of ATP-dependent interactions between DnaJ, DnaK and GrpE are required for fully efficient folding. Also involved, together with DnaK and GrpE, in the DNA replication of plasmids through activation of initiation proteins. The polypeptide is Chaperone protein DnaJ (Paraburkholderia phymatum (strain DSM 17167 / CIP 108236 / LMG 21445 / STM815) (Burkholderia phymatum)).